A 70-amino-acid polypeptide reads, in one-letter code: Large ribosomal subunit protein bL31 (70 aa).

Residues Cys-16, Cys-18, Cys-37, and Cys-40 each coordinate Zn(2+).

It belongs to the bacterial ribosomal protein bL31 family. Type A subfamily. As to quaternary structure, part of the 50S ribosomal subunit. It depends on Zn(2+) as a cofactor.

Binds the 23S rRNA. In Proteus mirabilis (strain HI4320), this protein is Large ribosomal subunit protein bL31.